The following is a 185-amino-acid chain: Ribosome-recycling factor (185 aa).

The protein belongs to the RRF family.

Its subcellular location is the cytoplasm. Its function is as follows. Responsible for the release of ribosomes from messenger RNA at the termination of protein biosynthesis. May increase the efficiency of translation by recycling ribosomes from one round of translation to another. The polypeptide is Ribosome-recycling factor (Clavibacter sepedonicus (Clavibacter michiganensis subsp. sepedonicus)).